We begin with the raw amino-acid sequence, 144 residues long: Large ribosomal subunit protein uL11 (144 aa).

This sequence belongs to the universal ribosomal protein uL11 family. In terms of assembly, part of the ribosomal stalk of the 50S ribosomal subunit. Interacts with L10 and the large rRNA to form the base of the stalk. L10 forms an elongated spine to which L12 dimers bind in a sequential fashion forming a multimeric L10(L12)X complex. Post-translationally, one or more lysine residues are methylated.

Functionally, forms part of the ribosomal stalk which helps the ribosome interact with GTP-bound translation factors. In Parafrankia sp. (strain EAN1pec), this protein is Large ribosomal subunit protein uL11.